The sequence spans 387 residues: MDQRKGSGSDANGGLAEATASRLRFEDPDEVMEENPAAAAATVGAEEEGGEGGGGEEVIGSDKTSADYYFDSYSHFGIHEEMLKDVVRTKSYQNVITQNSFLFKDKIVLDVGAGTGILSLFCAKAGAKHVYAIECSQMADMAKEIVKTNGYSNVITVIKGKVEEIELPVPKVDVIISEWMGYFLLFENMLNTVLYARDKWLADGGVVLPDKASLHLTAIEDAEYKEDKIEFWNNVYGFDMRCIKKQAMMEPLVDTVDANQIVTNCQLLKTMDISKMTPGDASFTVPFKLVAERNDYIHALVAYFNVSFTKCHKMMGFSTGPRSKATHWKQTVLYLEDVLTICEGETITGSMTVTPNKKNPRDIDIKLCYALSGHRCQVSRTQHYKMR.

Positions 1-60 (MDQRKGSGSDANGGLAEATASRLRFEDPDEVMEENPAAAAATVGAEEEGGEGGGGEEVIG) are disordered. The span at 34-44 (ENPAAAAATVG) shows a compositional bias: low complexity. Positions 66–387 (ADYYFDSYSH…VSRTQHYKMR (322 aa)) constitute an SAM-dependent MTase PRMT-type domain. S-adenosyl-L-methionine is bound by residues histidine 79, arginine 88, glycine 112, glutamate 134, and glutamate 163. Catalysis depends on residues glutamate 178 and glutamate 187.

The protein belongs to the class I-like SAM-binding methyltransferase superfamily. Protein arginine N-methyltransferase family.

Its subcellular location is the nucleus. The enzyme catalyses L-arginyl-[protein] + S-adenosyl-L-methionine = N(omega)-methyl-L-arginyl-[protein] + S-adenosyl-L-homocysteine + H(+). The catalysed reaction is L-arginyl-[protein] + 2 S-adenosyl-L-methionine = N(omega),N(omega)-dimethyl-L-arginyl-[protein] + 2 S-adenosyl-L-homocysteine + 2 H(+). In terms of biological role, arginine methyltransferase that methylates (mono and asymmetric dimethylation) the guanidino nitrogens of arginyl residues present in target proteins. This Oryza sativa subsp. indica (Rice) protein is Protein arginine N-methyltransferase 1 (PRMT1).